The primary structure comprises 339 residues: Anthranilate phosphoribosyltransferase (339 aa).

5-phospho-alpha-D-ribose 1-diphosphate is bound by residues Gly81, Gly84–Asp85, Ser89, Asn91–Ser94, Lys109–Ser117, and Ala121. Position 81 (Gly81) interacts with anthranilate. A Mg(2+)-binding site is contributed by Ser93. Asn112 provides a ligand contact to anthranilate. Arg167 provides a ligand contact to anthranilate. Mg(2+)-binding residues include Asp225 and Glu226.

This sequence belongs to the anthranilate phosphoribosyltransferase family. In terms of assembly, homodimer. It depends on Mg(2+) as a cofactor.

It catalyses the reaction N-(5-phospho-beta-D-ribosyl)anthranilate + diphosphate = 5-phospho-alpha-D-ribose 1-diphosphate + anthranilate. The protein operates within amino-acid biosynthesis; L-tryptophan biosynthesis; L-tryptophan from chorismate: step 2/5. In terms of biological role, catalyzes the transfer of the phosphoribosyl group of 5-phosphorylribose-1-pyrophosphate (PRPP) to anthranilate to yield N-(5'-phosphoribosyl)-anthranilate (PRA). The chain is Anthranilate phosphoribosyltransferase from Brucella ovis (strain ATCC 25840 / 63/290 / NCTC 10512).